Here is a 158-residue protein sequence, read N- to C-terminus: Transcription factor BTF3 homolog 4 (158 aa).

The 66-residue stretch at 33 to 98 (TADDKKLQSS…AETKQLTEML (66 aa)) folds into the NAC-A/B domain. The tract at residues 125–158 (LDNKAPKAEDIDEEDDDVPDLVENFDEASKNEAN) is disordered. Over residues 134–150 (DIDEEDDDVPDLVENFD) the composition is skewed to acidic residues.

Belongs to the NAC-beta family.

This Danio rerio (Zebrafish) protein is Transcription factor BTF3 homolog 4 (btf3l4).